The primary structure comprises 250 residues: 2,5-dichloro-2,5-cyclohexadiene-1,4-diol dehydrogenase (250 aa).

9 to 34 lines the NAD(+) pocket; the sequence is IIVTGGGSGIGRATVELLVASGANVA. Serine 141 is a substrate binding site. The active-site Proton acceptor is tyrosine 154.

The protein belongs to the short-chain dehydrogenases/reductases (SDR) family.

The enzyme catalyses 2,5-dichlorocyclohexa-2,5-dien-1,4-diol + NAD(+) = 2,5-dichlorohydroquinone + NADH + H(+). It functions in the pathway xenobiotic degradation; gamma-hexachlorocyclohexane degradation. Functionally, catalyzes the dehydrogenation of 2,5-dichloro-2,5-cyclohexadiene-1,4-diol (2,5-DDOL) to 2,5-dichlorohydroquinone (2,5-DCHQ), a step in the degradation of gamma-hexachlorocyclohexane (gamma-HCH or lindane). Has an essential role in this assimilation pathway that allows S.japonicum UT26 to grow on gamma-HCH as the sole source of carbon and energy. The polypeptide is 2,5-dichloro-2,5-cyclohexadiene-1,4-diol dehydrogenase (Sphingobium indicum (strain DSM 16413 / CCM 7287 / MTCC 6362 / UT26 / NBRC 101211 / UT26S) (Sphingobium japonicum)).